Consider the following 128-residue polypeptide: S-adenosylmethionine decarboxylase proenzyme (128 aa).

The active-site Schiff-base intermediate with substrate; via pyruvic acid is Ser-61. Position 61 is a pyruvic acid (Ser); by autocatalysis (Ser-61). His-66 (proton acceptor; for processing activity) is an active-site residue. The active-site Proton donor; for catalytic activity is the Cys-81.

This sequence belongs to the prokaryotic AdoMetDC family. Type 1 subfamily. In terms of assembly, heterotetramer of two alpha and two beta chains arranged as a dimer of alpha/beta heterodimers. Pyruvate serves as cofactor. Is synthesized initially as an inactive proenzyme. Formation of the active enzyme involves a self-maturation process in which the active site pyruvoyl group is generated from an internal serine residue via an autocatalytic post-translational modification. Two non-identical subunits are generated from the proenzyme in this reaction, and the pyruvate is formed at the N-terminus of the alpha chain, which is derived from the carboxyl end of the proenzyme. The post-translation cleavage follows an unusual pathway, termed non-hydrolytic serinolysis, in which the side chain hydroxyl group of the serine supplies its oxygen atom to form the C-terminus of the beta chain, while the remainder of the serine residue undergoes an oxidative deamination to produce ammonia and the pyruvoyl group blocking the N-terminus of the alpha chain.

The catalysed reaction is S-adenosyl-L-methionine + H(+) = S-adenosyl 3-(methylsulfanyl)propylamine + CO2. The protein operates within amine and polyamine biosynthesis; S-adenosylmethioninamine biosynthesis; S-adenosylmethioninamine from S-adenosyl-L-methionine: step 1/1. In terms of biological role, catalyzes the decarboxylation of S-adenosylmethionine to S-adenosylmethioninamine (dcAdoMet), the propylamine donor required for the synthesis of the polyamines spermine and spermidine from the diamine putrescine. The sequence is that of S-adenosylmethionine decarboxylase proenzyme from Parasynechococcus marenigrum (strain WH8102).